Reading from the N-terminus, the 389-residue chain is MKIHEYQGKELLRQFNVPVPNGIPAFSVDEAVKAAEKLGGPVWVVKAQIHAGGRGKGGGVKLARSMDEVKKYASEILGMQLKTHQTGPEGQKVNRLLIEDGADIKKEYYFSIVTDRGTQKNVIMASSEGGMDIEEVAESHPEKIIKVFVDPMVGLTDADCDIVAKGIGVPEASIPMARDVFKNLYKTYWDTDASLVEINPLILEGNGKIKALDAKFNFDPNALFRHPEIVAYRDIDEEDAAEIEASKFDLAYISLDGNIGCLVNGAGLAMATMDTIKLFGGEPANFLDVGGGATAEKVTEAFKIMLKNKSVEAILVNIFGGIMRCDVIADGVVTACKAVNLTVPLVVRMKGTNEELGKKILADSGLPIISADSMAEAATKVVAAVAKNK.

Residues K9–E244 enclose the ATP-grasp domain. Residues K46, G53–G55, E99, A102, and E107 each bind ATP. N199 and D213 together coordinate Mg(2+). Substrate-binding positions include N264 and G321–M323.

It belongs to the succinate/malate CoA ligase beta subunit family. Heterotetramer of two alpha and two beta subunits. Requires Mg(2+) as cofactor.

The enzyme catalyses succinate + ATP + CoA = succinyl-CoA + ADP + phosphate. It carries out the reaction GTP + succinate + CoA = succinyl-CoA + GDP + phosphate. The protein operates within carbohydrate metabolism; tricarboxylic acid cycle; succinate from succinyl-CoA (ligase route): step 1/1. Succinyl-CoA synthetase functions in the citric acid cycle (TCA), coupling the hydrolysis of succinyl-CoA to the synthesis of either ATP or GTP and thus represents the only step of substrate-level phosphorylation in the TCA. The beta subunit provides nucleotide specificity of the enzyme and binds the substrate succinate, while the binding sites for coenzyme A and phosphate are found in the alpha subunit. In Polynucleobacter asymbioticus (strain DSM 18221 / CIP 109841 / QLW-P1DMWA-1) (Polynucleobacter necessarius subsp. asymbioticus), this protein is Succinate--CoA ligase [ADP-forming] subunit beta.